Reading from the N-terminus, the 499-residue chain is Glucose-6-phosphate isomerase (499 aa).

The active-site Proton donor is the Glu-352. Residues His-383 and Lys-487 contribute to the active site.

This sequence belongs to the GPI family.

It localises to the cytoplasm. It catalyses the reaction alpha-D-glucose 6-phosphate = beta-D-fructose 6-phosphate. The protein operates within carbohydrate biosynthesis; gluconeogenesis. It participates in carbohydrate degradation; glycolysis; D-glyceraldehyde 3-phosphate and glycerone phosphate from D-glucose: step 2/4. In terms of biological role, catalyzes the reversible isomerization of glucose-6-phosphate to fructose-6-phosphate. The chain is Glucose-6-phosphate isomerase from Legionella pneumophila (strain Paris).